We begin with the raw amino-acid sequence, 478 residues long: MNALTTIDFNQHVIVRLPSKNYKIVELKPNTSVSLGKFGAFEVNDIIGYPFGLTFEIYYDGEEVSSDENRDSKPKNKIPIGKVRLLSQEIKDVNNDKDDGQSEPPLSIKEKSVSLELSSIDSSATNQNLVNMGSKAQELTVEEIEKMKQESLSSKEIIDKIIKSHKSFHNKTVYSQEKYVNRKKQKFAKYFTVEYLSSSNLLQFLIDKGDIQRVLDMSQESMGMLLNLANIQSEGNYLCMDETGGLLVYFLLERMFGGDNESKSKGKVIVIHENEHANLDLLKFANYSEKFIKEHVHTISLLDFFEPPTLQEIQSRFTPLPKEEARALKGGKKNSYYRKLRWYNTQWQILELTGEFLYDGLVMATTLHLPTLVPKLAEKIHGSRPIVCYGQFKETLLELAHTLYSDLRFLAPSILETRCRPYQSIRGKLHPLMTMKGGGGYLMWCHRVIPAPEPVSENATAADSSEKLAEHGAKKQKI.

A disordered region spans residues Ser456–Ile478. Over residues Ser464 to Ile478 the composition is skewed to basic and acidic residues.

Belongs to the TRM6/GCD10 family. In terms of assembly, heterotetramer; composed of two copies of TRM6/GCD10 and two copies of TRM61/GCD14.

The protein resides in the nucleus. Its function is as follows. Substrate-binding subunit of tRNA (adenine-N(1)-)-methyltransferase, which catalyzes the formation of N(1)-methyladenine at position 58 (m1A58) in initiator methionyl-tRNA. Also required for repression of GCN4 mRNA translation by the upstream open reading frames (uORFs) under conditions of amino acid sufficiency. This Saccharomyces cerevisiae (strain ATCC 204508 / S288c) (Baker's yeast) protein is tRNA (adenine(58)-N(1))-methyltransferase non-catalytic subunit TRM6 (GCD10).